A 1237-amino-acid polypeptide reads, in one-letter code: Anion exchange protein 2 (1237 aa).

The disordered stretch occupies residues 1–237; it reads MSSAPRRPAS…SYNLQERRRI (237 aa). Residues 1-704 are Cytoplasmic-facing; that stretch reads MSSAPRRPAS…DFRDALDPQC (704 aa). Basic and acidic residues-rich tracts occupy residues 37-49 and 58-75; these read ELHR…RFEE and GGEE…EYHR. Composition is skewed to basic residues over residues 76 to 85 and 94 to 110; these read QSSHHIHHPL and RRRK…RRRP. Phosphoserine is present on residues Ser113, Ser132, Ser144, Ser170, and Ser172. Residues 120-133 show a composition bias toward acidic residues; that stretch reads TIEEGEEDEDEASE. The segment covering 137-151 has biased composition (low complexity); the sequence is ARAPTQPSPASTPSS. Residues 205–215 are compositionally biased toward gly residues; sequence GTAGGDDGGAS. Ser239 carries the post-translational modification Phosphoserine. Thr253 is modified (phosphothreonine). At Lys270 the chain carries N6-methyllysine. The disordered stretch occupies residues 286 to 316; the sequence is RKNAKGSVQSGREGREPGPTPRARPRAPHKP. Ser439 bears the Phosphoserine mark. The tract at residues 445–466 is disordered; the sequence is SLLGHHHGQGAESDPHVTEPLI. The interval 704–1237 is membrane (anion exchange); sequence CLAAVIFIYF…DEYNEMPMPV (534 aa). Helical transmembrane passes span 705-725, 750-770, 792-812, and 822-842; these read LAAV…FGGL, FCLL…LLVF, IGFW…SFLV, and IFAF…LVKI. Topologically, residues 843–893 are extracellular; that stretch reads FQEHPLHGCSVSNSSEADSGDNATWAGTRVTLGLGNGSSAGPAGQGRPRGQ. Residues Asn855, Asn864, and Asn878 are each glycosylated (N-linked (GlcNAc...) asparagine). Residues 894-914 traverse the membrane as a helical segment; it reads PNTALLSLVLMAGTFFIAFFL. Residues 915 to 929 lie on the Cytoplasmic side of the membrane; sequence RKFKNGRFFPGRVRR. The next 5 helical transmembrane spans lie at 930-950, 985-1005, 1032-1052, 1086-1106, and 1109-1129; these read VIGD…DYSI, FPVW…ILIF, LLLI…WLAA, RVTG…GDLL, and IPLA…LNGI. Residue Cys1169 is the site of S-palmitoyl cysteine attachment. The helical transmembrane segment at 1170–1190 threads the bilayer; that stretch reads LALLWAVMSTAASLAFPFILI.

Belongs to the anion exchanger (TC 2.A.31) family.

It is found in the apical cell membrane. Its subcellular location is the basolateral cell membrane. The catalysed reaction is hydrogencarbonate(in) + chloride(out) = hydrogencarbonate(out) + chloride(in). Functionally, sodium-independent anion exchanger which mediates the electroneutral exchange of chloride for bicarbonate ions across the cell membrane. Plays an important role in osteoclast differentiation and function. Regulates bone resorption and calpain-dependent actin cytoskeleton organization in osteoclasts via anion exchange-dependent control of pH. Essential for intracellular pH regulation in CD8(+) T-cells upon CD3 stimulation, modulating CD8(+) T-cell response. The sequence is that of Anion exchange protein 2 (SLC4A2) from Equus caballus (Horse).